The following is a 667-amino-acid chain: Protein angel homolog 1 (667 aa).

A phosphoserine mark is found at S77 and S105.

This sequence belongs to the CCR4/nocturin family.

This chain is Protein angel homolog 1, found in Rattus norvegicus (Rat).